The sequence spans 300 residues: Ribosomal protein L11 methyltransferase (300 aa).

Residues threonine 152, glycine 173, aspartate 195, and asparagine 234 each coordinate S-adenosyl-L-methionine.

This sequence belongs to the methyltransferase superfamily. PrmA family.

Its subcellular location is the cytoplasm. It carries out the reaction L-lysyl-[protein] + 3 S-adenosyl-L-methionine = N(6),N(6),N(6)-trimethyl-L-lysyl-[protein] + 3 S-adenosyl-L-homocysteine + 3 H(+). Methylates ribosomal protein L11. This is Ribosomal protein L11 methyltransferase from Burkholderia orbicola (strain MC0-3).